The primary structure comprises 238 residues: Large ribosomal subunit protein uL3 (238 aa).

Disordered stretches follow at residues 140-164 and 212-238; these read SHRSIGSTGGRQDPGKTWKNKKMPG and LPKEAPKPGKFKVAGGEAEAAAQQEGA. Gln-151 carries the post-translational modification N5-methylglutamine. Positions 225–238 are enriched in low complexity; that stretch reads AGGEAEAAAQQEGA.

It belongs to the universal ribosomal protein uL3 family. As to quaternary structure, part of the 50S ribosomal subunit. Forms a cluster with proteins L14 and L19. Methylated by PrmB.

Functionally, one of the primary rRNA binding proteins, it binds directly near the 3'-end of the 23S rRNA, where it nucleates assembly of the 50S subunit. This Bradyrhizobium diazoefficiens (strain JCM 10833 / BCRC 13528 / IAM 13628 / NBRC 14792 / USDA 110) protein is Large ribosomal subunit protein uL3.